A 674-amino-acid polypeptide reads, in one-letter code: ATP-dependent DNA helicase Hel308 (674 aa).

ATP is bound by residues Gln-27 and 44 to 51 (VPTAAGKT). Residues 31–197 (IEQIRKGRNV…WLDASLIKSD (167 aa)) enclose the Helicase ATP-binding domain. The short motif at 142–145 (DEIH) is the DEAH box element. Residues 224–411 (SINQIIRETV…EAKVRFNTLA (188 aa)) form the Helicase C-terminal domain.

This sequence belongs to the helicase family. Hel308 subfamily. As to quaternary structure, monomer.

It catalyses the reaction Couples ATP hydrolysis with the unwinding of duplex DNA by translocating in the 3'-5' direction.. It carries out the reaction ATP + H2O = ADP + phosphate + H(+). In terms of biological role, DNA-dependent ATPase and 3'-5' DNA helicase that may be involved in repair of stalled replication forks. The chain is ATP-dependent DNA helicase Hel308 from Thermoplasma acidophilum (strain ATCC 25905 / DSM 1728 / JCM 9062 / NBRC 15155 / AMRC-C165).